Here is a 1131-residue protein sequence, read N- to C-terminus: MADDNETVVSAPICTAAWLYILPKEQKLIEILTTLSLMEKRKSVVISPLLLNLTVENDFFPTVKTPIINYGGTVITKITSFMPVCFFFHGTDVFLKEAEDHGNLDKLCKQTREKFNLQEFVVNGNRKSVDIGKICESVGRNADDVLCHIVVGNGFKELLFAGLLIPCVEEQIQVQVGECLAIKIPLYSATLFESEETLCIDTCTEFIQENGFYAPQISEVLFYLIFTSWGMTLRFNNTLELIKAGLKQFIQDTEQTVKLAPNKTYHGIPGQKLSPIEKDHLMLVDAVITELTFSYTAEYLDSIYENNQIMNFSEWPIIKSAETHEEKIVELKKLRLHLSSHVAALVFAANSILYSNKLAYISNTKQAFNSAITQETLLRSIQFCNSLSSLNEDFYNDARKLIKCNSSPCKEDKFSAFHLAYACATCPQILSHIIWNLNRMSIYNTNCGNSEIYNHIVNCSSNLCEFCEGKCCHSCIGTALIRINSRLPQISKTTKKEPIVMTMFSRFYADVDVLGSFGKKGVNESKDPMKEAQTTPSLDRFKFLGMIHDYCKKNNLIDAITGEDNLNFKSQNDFVNMINDLIQCIEEAVSKCISEMRKTQTSREQIENCLQSFNIDTTPLSLAFSPFFVFTYYKVILIVLQNLALIIGTGYVVDRPCTGNLISKWLMQQYQSLYGAFYNSHFKKGFLNMKTVKIASNVDMEQYIDFNLFKSGKYAKTSIQAKLCRLSMQCLKDFRVKNRPFNKPNKNTQNNPFFKKVKQKKNPLSGCLSFLLFKYHERLFPNLKISCLEFWQRILLNNMPKTIDIGNVEDMRSFIKFTFRVTNSYDEIDLLDIQPECLLSFIEYYFHNKLLSVLGYRDYLTSLHALTSKLVPQNPMLFPVFLKEHPTFSSVQEYVMHVKKLVGNGLKEPMTASLTKEPNFGSIFTGRSIITFGLMIEKFVSVASRDYFHFGQLGWIAGSGVDRNLNPPSSGLQDFRFMRQKFVIATKLCDIIVKKVKREAIVYDVEVIRGKVLNIIESLSNSVNPELLILAEVMKDRDSKPTMDDMLFYVDGREPLAKSVMNKIQHLTDLNVHDFSLSTLLSVFEEQVEDSAAIYDFSELLVEGNEQGFGILKCEETEHENEEPSLKKARL.

The Required for filament formation motif lies at 790 to 791 (FW). The tract at residues 1112-1131 (LKCEETEHENEEPSLKKARL) is required for nuclear localization.

The protein belongs to the herpesviridae major DNA-binding protein family. As to quaternary structure, homooligomers. Forms double-helical filaments necessary for the formation of replication compartments within the host nucleus. Interacts with the origin-binding protein. Interacts with the helicase primase complex; this interaction stimulates primer synthesis activity of the helicase-primase complex. Interacts with the DNA polymerase. Interacts with the alkaline exonuclease; this interaction increases its nuclease processivity.

Its subcellular location is the host nucleus. Its function is as follows. Single-stranded DNA-binding protein required for DNA replication. Plays several crucial roles in viral infection. Participates in the opening of the viral DNA origin to initiate replication by interacting with the origin-binding protein. May disrupt loops, hairpins and other secondary structures present on ssDNA to reduce and eliminate pausing of viral DNA polymerase at specific sites during elongation. Promotes viral DNA recombination by performing strand-transfer, characterized by the ability to transfer a DNA strand from a linear duplex to a complementary single-stranded DNA circle. Can also catalyze the renaturation of complementary single strands. Additionally, reorganizes the host cell nucleus, leading to the formation of prereplicative sites and replication compartments. This process is driven by the protein which can form double-helical filaments in the absence of DNA. The polypeptide is Major DNA-binding protein (Human herpesvirus 7 (strain JI) (HHV-7)).